Consider the following 94-residue polypeptide: Large ribosomal subunit protein bL25 (94 aa).

A disordered region spans residues 1-20; sequence MFKFNAEVRQSQGKGASRRL.

The protein belongs to the bacterial ribosomal protein bL25 family. As to quaternary structure, part of the 50S ribosomal subunit; part of the 5S rRNA/L5/L18/L25 subcomplex. Contacts the 5S rRNA. Binds to the 5S rRNA independently of L5 and L18.

This is one of the proteins that binds to the 5S RNA in the ribosome where it forms part of the central protuberance. The protein is Large ribosomal subunit protein bL25 of Pasteurella multocida (strain Pm70).